Here is a 174-residue protein sequence, read N- to C-terminus: MDYFTLFGLPARYLIDGNQLTTRYQELQRQFHPDRFATQPERERLASMQQAATINDAYQTLKHPLKRAEYMLSLQGFDLGNEQHTMRDTAFLMEQLELREELDAIERKPDAETLLAEFSRRVAQMTTTRTQQMVEQLDAQLWVQAADTVRKLRFLDKLQQQVEQLEERLFDDFA.

One can recognise a J domain in the interval 2–74 (DYFTLFGLPA…LKRAEYMLSL (73 aa)).

The protein belongs to the HscB family. In terms of assembly, interacts with HscA and stimulates its ATPase activity. Interacts with IscU.

Co-chaperone involved in the maturation of iron-sulfur cluster-containing proteins. Seems to help targeting proteins to be folded toward HscA. This Yersinia pestis bv. Antiqua (strain Antiqua) protein is Co-chaperone protein HscB.